The chain runs to 94 residues: Pyrimidine/purine nucleoside phosphorylase (94 aa).

It belongs to the nucleoside phosphorylase PpnP family.

It catalyses the reaction a purine D-ribonucleoside + phosphate = a purine nucleobase + alpha-D-ribose 1-phosphate. The catalysed reaction is adenosine + phosphate = alpha-D-ribose 1-phosphate + adenine. It carries out the reaction cytidine + phosphate = cytosine + alpha-D-ribose 1-phosphate. The enzyme catalyses guanosine + phosphate = alpha-D-ribose 1-phosphate + guanine. It catalyses the reaction inosine + phosphate = alpha-D-ribose 1-phosphate + hypoxanthine. The catalysed reaction is thymidine + phosphate = 2-deoxy-alpha-D-ribose 1-phosphate + thymine. It carries out the reaction uridine + phosphate = alpha-D-ribose 1-phosphate + uracil. The enzyme catalyses xanthosine + phosphate = alpha-D-ribose 1-phosphate + xanthine. In terms of biological role, catalyzes the phosphorolysis of diverse nucleosides, yielding D-ribose 1-phosphate and the respective free bases. Can use uridine, adenosine, guanosine, cytidine, thymidine, inosine and xanthosine as substrates. Also catalyzes the reverse reactions. This chain is Pyrimidine/purine nucleoside phosphorylase, found in Pseudomonas fluorescens (strain Pf0-1).